The following is a 113-amino-acid chain: Mini zinc finger protein 3 (113 aa).

The ZF-HD dimerization-type; degenerate zinc-finger motif lies at 24 to 83 (YGECRRNHAASTGGHAVDGCREFIAAEDGGGGNSTGAVGVAAAALKCAACGCHRSFHRRV). A disordered region spans residues 93 to 113 (DCDSGDTSSSSPSSSSSLSSE). Over residues 97 to 113 (GDTSSSSPSSSSSLSSE) the composition is skewed to low complexity.

Homo- and heterodimers.

The protein localises to the cytoplasm. In terms of biological role, inhibits zinc finger homeodomain (ZHD) transcription factors, by interacting with them to prevent both their nuclear localization and their DNA-binding properties. This Oryza sativa subsp. indica (Rice) protein is Mini zinc finger protein 3 (MIF3).